The following is a 120-amino-acid chain: Large ribosomal subunit protein uL18 (120 aa).

This sequence belongs to the universal ribosomal protein uL18 family. As to quaternary structure, part of the 50S ribosomal subunit; part of the 5S rRNA/L5/L18/L25 subcomplex. Contacts the 5S and 23S rRNAs.

Functionally, this is one of the proteins that bind and probably mediate the attachment of the 5S RNA into the large ribosomal subunit, where it forms part of the central protuberance. The chain is Large ribosomal subunit protein uL18 from Rhizobium rhizogenes (strain K84 / ATCC BAA-868) (Agrobacterium radiobacter).